A 440-amino-acid chain; its full sequence is NADH-quinone oxidoreductase subunit D 1 (440 aa).

The protein belongs to the complex I 49 kDa subunit family. As to quaternary structure, NDH-1 is composed of 14 different subunits. Subunits NuoB, C, D, E, F, and G constitute the peripheral sector of the complex.

The protein localises to the cell membrane. It carries out the reaction a quinone + NADH + 5 H(+)(in) = a quinol + NAD(+) + 4 H(+)(out). Its function is as follows. NDH-1 shuttles electrons from NADH, via FMN and iron-sulfur (Fe-S) centers, to quinones in the respiratory chain. The immediate electron acceptor for the enzyme in this species is believed to be a menaquinone. Couples the redox reaction to proton translocation (for every two electrons transferred, four hydrogen ions are translocated across the cytoplasmic membrane), and thus conserves the redox energy in a proton gradient. This is NADH-quinone oxidoreductase subunit D 1 from Streptomyces griseus subsp. griseus (strain JCM 4626 / CBS 651.72 / NBRC 13350 / KCC S-0626 / ISP 5235).